The chain runs to 155 residues: uncharacterized protein (155 aa).

The signal sequence occupies residues 1–23 (MKIRSLSRFVLASTMFASFTASA).

The protein to E.coli YkfB.

This is an uncharacterized protein from Escherichia coli (strain K12).